A 187-amino-acid chain; its full sequence is Large ribosomal subunit protein bL17 (187 aa).

Positions 122–187 are disordered; it reads PKVRSSRTST…EADAAEKSDK (66 aa). The span at 127–144 shows a compositional bias: low complexity; the sequence is SRTSTATAPVAAAPVAEA. Positions 145–157 are enriched in acidic residues; it reads PAEESDVPVEETD. Over residues 167–176 the composition is skewed to low complexity; that stretch reads AETTDAAAAE.

This sequence belongs to the bacterial ribosomal protein bL17 family. In terms of assembly, part of the 50S ribosomal subunit. Contacts protein L32.

This chain is Large ribosomal subunit protein bL17, found in Clavibacter sepedonicus (Clavibacter michiganensis subsp. sepedonicus).